Consider the following 1463-residue polypeptide: Nitric oxide synthase 1 (1463 aa).

Positions 1-200 (MESHMFSVQQ…LQGSGENNKL (200 aa)) are interaction with NOSIP. Residues 17-99 (SVRLFKRKVG…ETHVVLILRG (83 aa)) form the PDZ domain. Disordered regions lie at residues 110–194 (TFTG…LQGS), 215–250 (GKAI…LPLG), and 268–298 (VVLN…SKCP). Residues 158–240 (PDPGQEASSL…VEVQVDRDPD (83 aa)) are DYNLL1/PIN/nNOS-inhibiting protein-binding. Basic and acidic residues predominate over residues 226 to 243 (TETKDVEVQVDRDPDSKS). Polar residues predominate over residues 280-294 (PSASGKQSPTKNGSP). Ser334 contacts (6R)-L-erythro-5,6,7,8-tetrahydrobiopterin. Cys415 is a heme b binding site. The L-arginine site is built by Gln478, Trp587, Tyr588, and Glu592. Residues Val677, Trp678, and Phe691 each coordinate (6R)-L-erythro-5,6,7,8-tetrahydrobiopterin. Tyr706 contacts heme b. Residues 725–745 (KRRAIGFKKLAEAVKFSAKLM) are calmodulin-binding. Positions 755–969 (ATILYATETG…AFRTWAKKVF (215 aa)) constitute a Flavodoxin-like domain. Residues Thr761, Glu762, Thr763, Lys765, Ser766, Ser807, Thr808, and Gly812 each coordinate FMN. Phosphoserine is present on residues Ser881, Ser891, and Ser892. FMN is bound by residues Ser920, His925, Cys927, Glu953, and Gln957. Residues 1024 to 1271 (KRVSAARLLS…VRGAPSFHLP (248 aa)) form the FAD-binding FR-type domain. Residue Arg1044 coordinates NADP(+). His1066, Arg1207, Tyr1208, Tyr1209, Ser1210, Thr1225, and Ala1227 together coordinate FAD. Ser1230 contacts NADP(+). Residues Tyr1231, Val1244, Cys1245, and Ser1246 each contribute to the FAD site. 10 residues coordinate NADP(+): Thr1285, Arg1318, Ser1347, Arg1348, Lys1354, Tyr1356, Gln1358, Asp1391, Thr1432, and Arg1434.

Belongs to the NOS family. In terms of assembly, homodimer. Interacts with DLG4; the interaction possibly being prevented by the association between NOS1 and CAPON. Forms a ternary complex with CAPON and RASD1. Forms a ternary complex with CAPON and SYN1. Interacts with ZDHHC23. Interacts with NOSIP; which may impair its synaptic location. Interacts with HTR4. Interacts with SLC6A4. Interacts with VAC14. Interacts (via N-terminal domain) with DLG4 (via N-terminal tandem pair of PDZ domains). Interacts with SLC6A4. Forms a complex with ASL, ASS1 and SLC7A1; the complex regulates cell-autonomous L-arginine synthesis and citrulline recycling while channeling extracellular L-arginine to nitric oxide synthesis pathway. Interacts with DMD; localizes NOS1 to sarcolemma in muscle cells. Interacts with DYNLL1; inhibits the nitric oxide synthase activity. Heme b serves as cofactor. FAD is required as a cofactor. Requires FMN as cofactor. It depends on (6R)-L-erythro-5,6,7,8-tetrahydrobiopterin as a cofactor. Post-translationally, ubiquitinated; mediated by STUB1/CHIP in the presence of Hsp70 and Hsp40 (in vitro).

It is found in the cell membrane. Its subcellular location is the sarcolemma. It localises to the cell projection. The protein localises to the dendritic spine. The catalysed reaction is 2 L-arginine + 3 NADPH + 4 O2 + H(+) = 2 L-citrulline + 2 nitric oxide + 3 NADP(+) + 4 H2O. Its activity is regulated as follows. Stimulated by calcium/calmodulin. Inhibited by DYNLL1 that prevents the dimerization of the protein. Inhibited by NOSIP. Functionally, produces nitric oxide (NO) which is a messenger molecule with diverse functions throughout the body. In the brain and peripheral nervous system, NO displays many properties of a neurotransmitter. Probably has nitrosylase activity and mediates cysteine S-nitrosylation of cytoplasmic target proteins such SRR. The chain is Nitric oxide synthase 1 (NOS1) from Ovis aries (Sheep).